The primary structure comprises 199 residues: Recombination protein RecR (199 aa).

The C4-type zinc-finger motif lies at 57–72 (CQKCRTFTEQSLCPIC). In terms of domain architecture, Toprim spans 81-176 (DTLCVVETPA…AVSRIAHGVP (96 aa)).

This sequence belongs to the RecR family.

Its function is as follows. May play a role in DNA repair. It seems to be involved in an RecBC-independent recombinational process of DNA repair. It may act with RecF and RecO. The polypeptide is Recombination protein RecR (Shewanella amazonensis (strain ATCC BAA-1098 / SB2B)).